The primary structure comprises 417 residues: MMPTQRLAEADPQIAKLIREETRRQAEGLELIASENFVSPAVLEALGSTLTNKYAEGYPGKRYYGGCEVVDQVEQLAIDRAKQLFGADHANVQPHAGSQANMAAYFALAKPGDTVLAMSLNFGGHLTHGSPVNFSGKLFKIVPYGLRQSDETIDMDEVARLAREHRPRILMVGASAYSRTLHFDRFAEIANEVGAAMVVDMAHIAGLVAAGLHPSPVPHSEIVTTTTHKTLRGPRGGMILCREAHAKTLNSQIFPGIQGGPLEHVIAAKAVAFGEALRPEFKEYQRRIVENAQVLAEGLKSAGLRLVSGGTDNHLMLVDLRPKKLTGKVAEEALGKAGITVNKNMIPWDPEKPMTTSGIRVGTPALSTRGMGPREMTLVAALIGRVLDAPADEQVLARVRGEVKDLCAHFPMYADRV.

(6S)-5,6,7,8-tetrahydrofolate contacts are provided by residues Leu120 and 124–126; that span reads GHL. Lys229 carries the N6-(pyridoxal phosphate)lysine modification.

This sequence belongs to the SHMT family. In terms of assembly, homodimer. Requires pyridoxal 5'-phosphate as cofactor.

It is found in the cytoplasm. It carries out the reaction (6R)-5,10-methylene-5,6,7,8-tetrahydrofolate + glycine + H2O = (6S)-5,6,7,8-tetrahydrofolate + L-serine. It functions in the pathway one-carbon metabolism; tetrahydrofolate interconversion. The protein operates within amino-acid biosynthesis; glycine biosynthesis; glycine from L-serine: step 1/1. Functionally, catalyzes the reversible interconversion of serine and glycine with tetrahydrofolate (THF) serving as the one-carbon carrier. This reaction serves as the major source of one-carbon groups required for the biosynthesis of purines, thymidylate, methionine, and other important biomolecules. Also exhibits THF-independent aldolase activity toward beta-hydroxyamino acids, producing glycine and aldehydes, via a retro-aldol mechanism. This Anaeromyxobacter dehalogenans (strain 2CP-C) protein is Serine hydroxymethyltransferase.